Consider the following 295-residue polypeptide: Hydroxyquinol 1,2-dioxygenase (295 aa).

Tyrosine 165, tyrosine 200, histidine 224, and histidine 226 together coordinate Fe cation.

The protein belongs to the intradiol ring-cleavage dioxygenase family. It depends on Fe(3+) as a cofactor.

It carries out the reaction benzene-1,2,4-triol + O2 = maleylacetate + 2 H(+). Its pathway is aromatic compound metabolism. Its function is as follows. Involved in the gamma-resorcylate (2,6-dihydroxybenzoate) catabolism. Catalyzes the conversion of hydroxyquinol to malelylacetate. This is Hydroxyquinol 1,2-dioxygenase from Rhizobium sp. (strain MTP-10005).